We begin with the raw amino-acid sequence, 140 residues long: Profilin-1 (140 aa).

A2 carries the post-translational modification N-acetylalanine. S28 is modified (phosphoserine). K54 is covalently cross-linked (Glycyl lysine isopeptide (Lys-Gly) (interchain with G-Cter in SUMO2); alternate). K54 participates in a covalent cross-link: Glycyl lysine isopeptide (Lys-Gly) (interchain with G-Cter in ubiquitin); alternate. Position 57 is a phosphoserine (S57). An N6-acetyllysine modification is found at K108. The residue at position 129 (Y129) is a Phosphotyrosine. Position 138 is a phosphoserine; by ROCK1 (S138).

Belongs to the profilin family. As to quaternary structure, found in a complex with XPO6, Ran, ACTB and PFN1. Interacts with ACTB. Interacts with VASP. Interacts with HTT. Interacts with SH3BGRL. Occurs in many kinds of cells as a complex with monomeric actin in a 1:1 ratio. Interacts with ACTMAP. Post-translationally, phosphorylation at Ser-138 reduces its affinity for G-actin and blocks its interaction with HTT, reducing its ability to inhibit androgen receptor (AR) and HTT aggregation.

The protein localises to the cytoplasm. It is found in the cytoskeleton. Functionally, binds to actin and affects the structure of the cytoskeleton. At high concentrations, profilin prevents the polymerization of actin, whereas it enhances it at low concentrations. By binding to PIP2, it inhibits the formation of IP3 and DG. Inhibits androgen receptor (AR) and HTT aggregation and binding of G-actin is essential for its inhibition of AR. The polypeptide is Profilin-1 (Pfn1) (Mus musculus (Mouse)).